We begin with the raw amino-acid sequence, 753 residues long: Inactive protein-tyrosine phosphatase egg-4 (753 aa).

2 disordered regions span residues 26 to 46 (TSLQ…STDN) and 75 to 145 (SFRK…SGHG). Residues 35–46 (NTDDSSADSTDN) are compositionally biased toward low complexity. Basic and acidic residues-rich tracts occupy residues 84–94 (AQKDRRSKERL) and 129–145 (VSEK…SGHG). One can recognise a Tyrosine-protein phosphatase domain in the interval 408 to 661 (MERRFEILEN…IFVHRLVAFF (254 aa)).

The protein belongs to the protein-tyrosine phosphatase family. Part of a complex, consisting of pseudophosphatases egg-3, egg-4, egg-5 and kinase mbk-2; this complex is required for the oocyte-to-zygote transition. Interacts (via tyrosine-protein phosphatase domain) with kinase mbk-2 (via 'Tyr-619' and 'Tyr-621'); mbk-2 tyrosine phosphorylation enhances the interaction. The interaction inhibits mbk-2 kinase activity and is required for mbk-2 oocyte cortex localization. Interacts with egg-3.

Its subcellular location is the cytoplasm. It localises to the cell cortex. In terms of biological role, inactive phosphatase which acts redundantly with egg-5 in the oocyte-to-zygote transition. Required for the polarization of cortical actin cytoskeleton rearrangement in the oocyte before and after fertilization. Together with egg-5, required for the cortical localization of kinase mbk-2 and for the inhibition of mbk-2 kinase activity in maturing oocyte until the end of meiosis I. Also required for kinase mbk-2, pseudophosphatase egg-3 and chitin synthase chs-1 localization to cytoplasmic foci after fertilization. This is Inactive protein-tyrosine phosphatase egg-4 from Caenorhabditis elegans.